Reading from the N-terminus, the 277-residue chain is S-formylglutathione hydrolase FrmB (277 aa).

Active-site charge relay system residues include Ser145, Asp221, and His254.

The protein belongs to the esterase D family.

It catalyses the reaction S-formylglutathione + H2O = formate + glutathione + H(+). Its function is as follows. Serine hydrolase involved in the detoxification of formaldehyde. Hydrolyzes S-formylglutathione to glutathione and formate. This Escherichia coli O6:H1 (strain CFT073 / ATCC 700928 / UPEC) protein is S-formylglutathione hydrolase FrmB (frmB).